The primary structure comprises 164 residues: Peptidyl-prolyl cis-trans isomerase B (164 aa).

Residues 1 to 162 form the PPIase cyclophilin-type domain; the sequence is MVTFHTNHGD…EDVIIESVTV (162 aa).

It belongs to the cyclophilin-type PPIase family.

The protein localises to the cytoplasm. The catalysed reaction is [protein]-peptidylproline (omega=180) = [protein]-peptidylproline (omega=0). With respect to regulation, inhibition by cyclosporin A with a Ki of 25 to 50 mu-mol, a concentration 1000-fold higher than that required for eukaryotic PPIases. PPIases accelerate the folding of proteins. It catalyzes the cis-trans isomerization of proline imidic peptide bonds in oligopeptides. The sequence is that of Peptidyl-prolyl cis-trans isomerase B (ppiB) from Escherichia coli (strain K12).